A 181-amino-acid polypeptide reads, in one-letter code: ATP synthase subunit delta (181 aa).

It belongs to the ATPase delta chain family. In terms of assembly, F-type ATPases have 2 components, F(1) - the catalytic core - and F(0) - the membrane proton channel. F(1) has five subunits: alpha(3), beta(3), gamma(1), delta(1), epsilon(1). F(0) has three main subunits: a(1), b(2) and c(10-14). The alpha and beta chains form an alternating ring which encloses part of the gamma chain. F(1) is attached to F(0) by a central stalk formed by the gamma and epsilon chains, while a peripheral stalk is formed by the delta and b chains.

It is found in the cell membrane. In terms of biological role, f(1)F(0) ATP synthase produces ATP from ADP in the presence of a proton or sodium gradient. F-type ATPases consist of two structural domains, F(1) containing the extramembraneous catalytic core and F(0) containing the membrane proton channel, linked together by a central stalk and a peripheral stalk. During catalysis, ATP synthesis in the catalytic domain of F(1) is coupled via a rotary mechanism of the central stalk subunits to proton translocation. Functionally, this protein is part of the stalk that links CF(0) to CF(1). It either transmits conformational changes from CF(0) to CF(1) or is implicated in proton conduction. This Lactiplantibacillus plantarum (strain ATCC BAA-793 / NCIMB 8826 / WCFS1) (Lactobacillus plantarum) protein is ATP synthase subunit delta.